The primary structure comprises 84 residues: Conotoxin Tx8.1 (84 aa).

Residues 1 to 19 (LKMGAMFVLLLLFTLASSH) form the signal peptide. Residues 20–44 (REGDIQARKTHLKSDFYRTLPRFAR) constitute a propeptide that is removed on maturation.

This sequence belongs to the conotoxin S superfamily. Post-translationally, contains 5 disulfide bonds. As to expression, expressed by the venom duct.

The protein localises to the secreted. This chain is Conotoxin Tx8.1, found in Conus textile (Cloth-of-gold cone).